Here is a 254-residue protein sequence, read N- to C-terminus: Allene oxide cyclase 4, chloroplastic (254 aa).

The N-terminal 52 residues, 1-52 (MIMASSAAASISMITLRNLSRNHQSHQSTFLGFSRSFHNQRISSNSPGLSTR), are a transit peptide targeting the chloroplast.

Belongs to the allene oxide cyclase family. In terms of tissue distribution, highly expressed in fully developed leaves.

The protein resides in the plastid. It is found in the chloroplast. It catalyses the reaction (9Z,13S,15Z)-12,13-epoxyoctadeca-9,11,15-trienoate = (9S,13S,15Z)-12-oxophyto-10,15-dienoate. In terms of biological role, involved in the production of 12-oxo-phytodienoic acid (OPDA), a precursor of jasmonic acid. The polypeptide is Allene oxide cyclase 4, chloroplastic (AOC4) (Arabidopsis thaliana (Mouse-ear cress)).